A 1220-amino-acid polypeptide reads, in one-letter code: DNA-directed RNA polymerase subunit beta (1220 aa).

This sequence belongs to the RNA polymerase beta chain family. In terms of assembly, the RNAP catalytic core consists of 2 alpha, 1 beta, 1 beta' and 1 omega subunit. When a sigma factor is associated with the core the holoenzyme is formed, which can initiate transcription.

It catalyses the reaction RNA(n) + a ribonucleoside 5'-triphosphate = RNA(n+1) + diphosphate. In terms of biological role, DNA-dependent RNA polymerase catalyzes the transcription of DNA into RNA using the four ribonucleoside triphosphates as substrates. The protein is DNA-directed RNA polymerase subunit beta of Mesomycoplasma hyopneumoniae (strain 7448) (Mycoplasma hyopneumoniae).